The primary structure comprises 807 residues: Glycerol-3-phosphate acyltransferase (807 aa).

The HXXXXD motif motif lies at 305–310; the sequence is CHRSHM.

Belongs to the GPAT/DAPAT family.

The protein localises to the cell inner membrane. The catalysed reaction is sn-glycerol 3-phosphate + an acyl-CoA = a 1-acyl-sn-glycero-3-phosphate + CoA. It functions in the pathway phospholipid metabolism; CDP-diacylglycerol biosynthesis; CDP-diacylglycerol from sn-glycerol 3-phosphate: step 1/3. The polypeptide is Glycerol-3-phosphate acyltransferase (Aliivibrio fischeri (strain MJ11) (Vibrio fischeri)).